The primary structure comprises 570 residues: Periplasmic trehalase (570 aa).

The N-terminal stretch at 1-34 is a signal peptide; that stretch reads MIPPEIRRSVLLQKAIKLALAGTLLTFASFSATA. Substrate is bound by residues arginine 159, 166 to 167, asparagine 203, 212 to 214, 284 to 286, and glycine 317; these read WD, RSQ, and RPE. Residues aspartate 319 and glutamate 503 each act as proton donor/acceptor in the active site. Glutamate 518 contacts substrate. The tract at residues 544-570 is disordered; sequence KPCDSVPSTRPASLSATPTKTPSAATQ. Residues 554–570 are compositionally biased toward low complexity; that stretch reads PASLSATPTKTPSAATQ.

This sequence belongs to the glycosyl hydrolase 37 family. As to quaternary structure, monomer.

The protein localises to the periplasm. It carries out the reaction alpha,alpha-trehalose + H2O = alpha-D-glucose + beta-D-glucose. Its function is as follows. Provides the cells with the ability to utilize trehalose at high osmolarity by splitting it into glucose molecules that can subsequently be taken up by the phosphotransferase-mediated uptake system. This is Periplasmic trehalase from Salmonella dublin (strain CT_02021853).